A 37-amino-acid chain; its full sequence is MKVRPSVKPICEKCKVIRRRGKVMIICENPKHKQRQG.

Belongs to the bacterial ribosomal protein bL36 family.

The chain is Large ribosomal subunit protein bL36 from Geobacillus kaustophilus (strain HTA426).